A 433-amino-acid chain; its full sequence is Probable M18 family aminopeptidase 2 (433 aa).

His-79, His-153, and His-404 together coordinate Zn(2+).

The protein belongs to the peptidase M18 family. It depends on Zn(2+) as a cofactor.

The sequence is that of Probable M18 family aminopeptidase 2 from Mycobacterium tuberculosis (strain ATCC 25177 / H37Ra).